The sequence spans 470 residues: MHFSIPETESRSGDSGGSAYVAYNIHVNGVLHCRVRYSQLLGLHEQLRKEYGANVVPAFPPKKLFSLTPAEVEQRREQLEKYMQAVRQDPLLGSSETFNSFLRRAQQETQQVPTEEVSLEVLLSNGQKVLVTVLTSDQTEDVLEAVAAKLDLPDDLIGYFSLFLVREKEDGAFSFVRKLQEFELPYVSVTSLRSQEYKIVLRKSYWDSAYDDDVMENRVGLNLLYAQTVSDIEHGWILVTKEQHRQLKSLQEKVSKKEFLRLAQTLRHYGYLRFDACVADFPEKDCPVVVSAGNSELSLQLRLPGQQLREGSFRVTRMRCWRVTSSVPLPSGGTSSPSRGRGEVRLELAFEYLMSKDRLQWVTITSPQAIMMSICLQSMVDELMVKKSGGSIRKMLRRRVGGTLRRSDSQQAVKSPPLLESPDASRESMVKLSSKLSAVSLRGIGSPSTDASASAVHGNFAFEGIGDEDL.

Residues 1-109 form the PX domain; that stretch reads MHFSIPETES…SFLRRAQQET (109 aa). A 1,2-diacyl-sn-glycero-3-phospho-(1D-myo-inositol-3-phosphate)-binding residues include Arg36, Ser38, Lys62, and Arg75. In terms of domain architecture, Ras-associating spans 115-206; that stretch reads EEVSLEVLLS…YKIVLRKSYW (92 aa). Positions 115 to 432 are FERM-like; it reads EEVSLEVLLS…DASRESMVKL (318 aa). A PTB-like F3 module region spans residues 270–432; sequence GYLRFDACVA…DASRESMVKL (163 aa). 7 positions are modified to phosphoserine: Ser336, Ser407, Ser409, Ser415, Ser421, Ser437, and Ser440. The disordered stretch occupies residues 401 to 426; sequence GGTLRRSDSQQAVKSPPLLESPDASR.

This sequence belongs to the sorting nexin family. As to quaternary structure, monomer. Interacts with APP (via cytoplasmic YXNPXY motif). Interacts with KIF1B. Interacts with the C-termini of P-selectin, PTC, LDLR, VLDLR, LRP1 and LRP8. Interacts with KRIT1 (via N-terminus). Interacts with HRAS. Interacts with ITGB1 and ITGB5 (via NPxY motif). Interacts with CCDC22 and CCDC93; the interaction associates SNX17 with the CCC complex. Interacts (via C-terminus) with VPS26C and VPS35L; the interactions are direct and associate SNX17 with the retriever complex. Detected in brain neurons (at protein level). Broadly expressed, with highest levels in brain and placenta, and lowest levels in colon, intestine and liver.

The protein resides in the cytoplasm. Its subcellular location is the early endosome. It is found in the cytoplasmic vesicle membrane. Functionally, critical regulator of endosomal recycling of numerous surface proteins, including integrins, signaling receptor and channels. Binds to NPxY sequences in the cytoplasmic tails of target cargos. Associates with retriever and CCC complexes to prevent lysosomal degradation and promote cell surface recycling of numerous cargos such as integrins ITGB1, ITGB5 and their associated alpha subunits. Also required for maintenance of normal cell surface levels of APP and LRP1. Interacts with membranes containing phosphatidylinositol 3-phosphate (PtdIns(3P)). This chain is Sorting nexin-17 (Snx17), found in Mus musculus (Mouse).